Reading from the N-terminus, the 270-residue chain is Abhydrolase domain-containing protein C22H12.03 (270 aa).

Residues 21–257 (PPVLIFHGLL…CGHWVHFEKP (237 aa)) enclose the AB hydrolase-1 domain. Residues Ser95, Glu190, and His250 each act as charge relay system in the active site.

Belongs to the AB hydrolase superfamily.

It is found in the mitochondrion. The polypeptide is Abhydrolase domain-containing protein C22H12.03 (Schizosaccharomyces pombe (strain 972 / ATCC 24843) (Fission yeast)).